The following is a 226-amino-acid chain: V-type proton ATPase subunit E 2 (226 aa).

This sequence belongs to the V-ATPase E subunit family. V-ATPase is a heteromultimeric enzyme made up of two complexes: the ATP-hydrolytic V1 complex and the proton translocation V0 complex. The V1 complex consists of three catalytic AB heterodimers that form a heterohexamer, three peripheral stalks each consisting of EG heterodimers, one central rotor including subunits D and F, and the regulatory subunits C and H. The proton translocation complex V0 consists of the proton transport subunit a, a ring of proteolipid subunits c9c'', rotary subunit d, subunits e and f, and the accessory subunits ATP6AP1/Ac45 and ATP6AP2/PRR.

In terms of biological role, subunit of the V1 complex of vacuolar(H+)-ATPase (V-ATPase), a multisubunit enzyme composed of a peripheral complex (V1) that hydrolyzes ATP and a membrane integral complex (V0) that translocates protons. V-ATPase is responsible for acidifying and maintaining the pH of intracellular compartments and in some cell types, is targeted to the plasma membrane, where it is responsible for acidifying the extracellular environment. This chain is V-type proton ATPase subunit E 2 (ATP6V1E2), found in Bos taurus (Bovine).